Here is a 189-residue protein sequence, read N- to C-terminus: dCTP deaminase, dUMP-forming (189 aa).

DCTP is bound by residues 101 to 106 (KSSLGR), Asp-119, 127 to 129 (TLE), Gln-148, Tyr-162, Lys-170, and Gln-174. Glu-129 acts as the Proton donor/acceptor in catalysis. The tract at residues 163–189 (GSGKLGSKYQGQRGPTPSKAYLNFPNK) is disordered.

It belongs to the dCTP deaminase family. In terms of assembly, homotrimer.

It catalyses the reaction dCTP + 2 H2O = dUMP + NH4(+) + diphosphate. Its pathway is pyrimidine metabolism; dUMP biosynthesis; dUMP from dCTP: step 1/1. Its function is as follows. Bifunctional enzyme that catalyzes both the deamination of dCTP to dUTP and the hydrolysis of dUTP to dUMP without releasing the toxic dUTP intermediate. The sequence is that of dCTP deaminase, dUMP-forming from Corynebacterium glutamicum (strain R).